We begin with the raw amino-acid sequence, 1033 residues long: E3 ubiquitin-protein ligase Topors (1033 aa).

Over residues Met1–Ser10 the composition is skewed to pro residues. The interval Met1 to Arg36 is disordered. Residues Glu52–Tyr376 are required for DNA-binding. Residues Lys74, Lys77, Lys84, and Lys89 each participate in a glycyl lysine isopeptide (Lys-Gly) (interchain with G-Cter in SUMO2) cross-link. The residue at position 99 (Ser99) is a Phosphoserine. Residues Cys104–Lys143 form an RING-type zinc finger. Lys160 is covalently cross-linked (Glycyl lysine isopeptide (Lys-Gly) (interchain with G-Cter in SUMO2)). Ser196 is subject to Phosphoserine. Lys251 is covalently cross-linked (Glycyl lysine isopeptide (Lys-Gly) (interchain with G-Cter in SUMO2)). 2 disordered regions span residues Gln414–Asp477 and Val496–Leu692. The span at Val434–Asp444 shows a compositional bias: low complexity. The sumoylation and localization to discrete nuclear foci stretch occupies residues Ser438–Asp574. Residues Ser438 to Ser654 form an interaction with SUMO1 region. Residues Thr455–Thr464 are compositionally biased toward polar residues. The interaction with p53/TP53 stretch occupies residues Ser457–Ser731. The interval Ser457–His879 is interaction with TOP1. Over residues Asn465–Asp477 the composition is skewed to low complexity. Ser500 bears the Phosphoserine mark. Residues Pro507–Glu518 are compositionally biased toward basic and acidic residues. A compositionally biased stretch (low complexity) spans Ser522–Ser535. Residues Leu540 to Ser566 are compositionally biased toward basic and acidic residues. Lys561 participates in a covalent cross-link: Glycyl lysine isopeptide (Lys-Gly) (interchain with G-Cter in SUMO). A Phosphoserine modification is found at Ser585. Composition is skewed to basic residues over residues Arg613 to Arg629 and Pro637 to Arg647. Residues Ser654–Arg669 are compositionally biased toward low complexity. Lys701 participates in a covalent cross-link: Glycyl lysine isopeptide (Lys-Gly) (interchain with G-Cter in SUMO2). Disordered regions lie at residues Arg713–Asp934 and Thr970–Ser1033. The residue at position 718 (Ser718) is a Phosphoserine; by PLK1. Residues Arg721 to Tyr730 are compositionally biased toward basic residues. The span at Ser731–Arg747 shows a compositional bias: polar residues. Ser734 is modified (phosphoserine). Residues Ser770–Ser780 are compositionally biased toward low complexity. A compositionally biased stretch (basic and acidic residues) spans Phe815–Ser837. Glycyl lysine isopeptide (Lys-Gly) (interchain with G-Cter in SUMO2) cross-links involve residues Lys818 and Lys834. Residues Lys851 to Arg860 are compositionally biased toward basic residues. The segment at Lys851 to Glu914 is interaction with UBE2I. Phosphoserine occurs at positions 861 and 863. The span at Lys877–His894 shows a compositional bias: basic residues. Residues Ser909, Ser911, Ser999, Ser1016, and Ser1025 each carry the phosphoserine modification. Residues Thr992–Ala1008 show a composition bias toward polar residues.

As to quaternary structure, interacts with TOP1. Interacts with the SUMO1 conjugating enzyme UBE2I. Interacts with SUMO1. Interacts with NKX3-1; polyubiquitinates NKX3-1 and induces its proteasomal degradation. Interacts with SIN3A; sumoylates SIN3A. Interacts with IKBKE; induced by DNA damage. Interacts with p53/TP53. Interacts with PARK7/DJ-1. Post-translationally, phosphorylation at Ser-99 regulates the E3 ubiquitin-protein ligase activity but not the SUMO1-protein ligase activity. Phosphorylation at Ser-718 increases the E3 ubiquitin-protein ligase activity versus the E3 SUMO1-protein ligase activity resulting in increased p53/TP53 ubiquitination and degradation. In terms of processing, sumoylated.

It is found in the nucleus. The protein resides in the PML body. The enzyme catalyses S-ubiquitinyl-[E2 ubiquitin-conjugating enzyme]-L-cysteine + [acceptor protein]-L-lysine = [E2 ubiquitin-conjugating enzyme]-L-cysteine + N(6)-ubiquitinyl-[acceptor protein]-L-lysine.. In terms of biological role, functions as an E3 ubiquitin-protein ligase and as a E3 SUMO1-protein ligase. Probable tumor suppressor involved in cell growth, cell proliferation and apoptosis that regulates p53/TP53 stability through ubiquitin-dependent degradation. May regulate chromatin modification through sumoylation of several chromatin modification-associated proteins. May be involved in DNA-damage-induced cell death through IKBKE sumoylation. The polypeptide is E3 ubiquitin-protein ligase Topors (Topors) (Mus musculus (Mouse)).